The following is a 112-amino-acid chain: Small ribosomal subunit protein bS6 (112 aa).

Belongs to the bacterial ribosomal protein bS6 family.

In terms of biological role, binds together with bS18 to 16S ribosomal RNA. The polypeptide is Small ribosomal subunit protein bS6 (Chlamydia trachomatis serovar L2 (strain ATCC VR-902B / DSM 19102 / 434/Bu)).